A 541-amino-acid chain; its full sequence is Phenazine N-monooxygenase PhzNO1 (541 aa).

FAD contacts are provided by residues aspartate 39, 47-50 (TWYW), 59-60 (DT), tyrosine 65, and isoleucine 112. Position 57–59 (57–59 (RAD)) interacts with NADP(+). Residues 186–192 (TGSTGVQ), 209–210 (RS), and tryptophan 492 each bind NADP(+).

This sequence belongs to the FAD-binding monooxygenase family. The cofactor is FAD.

The enzyme catalyses 1,6-dihydroxyphenazine + NADPH + O2 = 1,6-dihydroxyphenazine N(5)-oxide + NADP(+) + H2O. It carries out the reaction 1,6-dihydroxyphenazine N(5)-oxide + NADPH + O2 = 1,6-dihydroxyphenazine N(5),N(10)-dioxide + NADP(+) + H2O. The catalysed reaction is 1-hydroxy-6-methoxyphenazine + NADPH + O2 = 1-hydroxy-6-methoxyphenazine N(10)-oxide + NADP(+) + H2O. It catalyses the reaction quinolin-8-ol + NADPH + O2 = 8-hydroxyquinoline N-oxide + NADP(+) + H2O. Involved in the biosynthesis of phenazine natural products including myxin, an N(5),N(10)-dioxide phenazine antiobiotic, which has antimicrobial activity. Catalyzes the aromatic N-oxidations of phenazines, such as 1,6-dihydroxyphenazine (DHP), 1,6-dihydroxyphenazine N(5)-oxide (DHPO) and 1-hydroxy-6-methoxyphenazine to produce DHPO, iodinin (1,6-dihydroxyphenazine N(5),N(10)-dioxide) and 1-hydroxy-6-methoxyphenazine N(10)-oxide, respectively. Also catalyzes the N-oxidation of 8-hydroxyquinoline, but not 6-hydroxyquinoline (6-HQ), quinoline, quinoxaline, quinine and 2-phenylpyridine. In Lysobacter antibioticus, this protein is Phenazine N-monooxygenase PhzNO1.